Here is a 439-residue protein sequence, read N- to C-terminus: Probable glycine dehydrogenase (decarboxylating) subunit 1 (439 aa).

This sequence belongs to the GcvP family. N-terminal subunit subfamily. In terms of assembly, the glycine cleavage system is composed of four proteins: P, T, L and H. In this organism, the P 'protein' is a heterodimer of two subunits.

It catalyses the reaction N(6)-[(R)-lipoyl]-L-lysyl-[glycine-cleavage complex H protein] + glycine + H(+) = N(6)-[(R)-S(8)-aminomethyldihydrolipoyl]-L-lysyl-[glycine-cleavage complex H protein] + CO2. Its function is as follows. The glycine cleavage system catalyzes the degradation of glycine. The P protein binds the alpha-amino group of glycine through its pyridoxal phosphate cofactor; CO(2) is released and the remaining methylamine moiety is then transferred to the lipoamide cofactor of the H protein. The chain is Probable glycine dehydrogenase (decarboxylating) subunit 1 from Aquifex aeolicus (strain VF5).